The following is a 149-amino-acid chain: Large ribosomal subunit protein bL9 (149 aa).

The protein belongs to the bacterial ribosomal protein bL9 family.

Functionally, binds to the 23S rRNA. The chain is Large ribosomal subunit protein bL9 from Thiobacillus denitrificans (strain ATCC 25259 / T1).